The following is a 439-amino-acid chain: Nuclear hormone receptor family member nhr-97 (439 aa).

Residues 1-13 show a composition bias toward polar residues; that stretch reads MSGDAQPSSNQRA. The disordered stretch occupies residues 1–22; it reads MSGDAQPSSNQRATEARPPPSP. The segment at residues 32-108 is a DNA-binding region (nuclear receptor); sequence GALCVVCGDR…VGMKIEAVKM (77 aa). 2 consecutive NR C4-type zinc fingers follow at residues 35 to 56 and 72 to 96; these read CVVC…CHGC and CRYG…FHRC. The segment at 112 to 135 is disordered; the sequence is LTKRKKEKTDEDDTDDGGSHESFE. The NR LBD domain occupies 173–408; that stretch reads FVQPSLQNLL…GEGLLFWQLY (236 aa).

The protein belongs to the nuclear hormone receptor family.

It is found in the nucleus. In terms of biological role, orphan nuclear receptor. This Caenorhabditis elegans protein is Nuclear hormone receptor family member nhr-97 (nhr-97).